Here is a 218-residue protein sequence, read N- to C-terminus: Small ribosomal subunit protein uS3c (218 aa).

Residues 43 to 118 (IKNYVQKNMR…KLNIAITRIA (76 aa)) form the KH type-2 domain.

The protein belongs to the universal ribosomal protein uS3 family. As to quaternary structure, part of the 30S ribosomal subunit.

The protein localises to the plastid. It localises to the chloroplast. The protein is Small ribosomal subunit protein uS3c (rps3) of Buxus microphylla (Littleleaf boxwood).